A 348-amino-acid polypeptide reads, in one-letter code: Phospho-2-dehydro-3-deoxyheptonate aldolase, Trp-sensitive (348 aa).

Belongs to the class-I DAHP synthase family.

It carries out the reaction D-erythrose 4-phosphate + phosphoenolpyruvate + H2O = 7-phospho-2-dehydro-3-deoxy-D-arabino-heptonate + phosphate. The protein operates within metabolic intermediate biosynthesis; chorismate biosynthesis; chorismate from D-erythrose 4-phosphate and phosphoenolpyruvate: step 1/7. Stereospecific condensation of phosphoenolpyruvate (PEP) and D-erythrose-4-phosphate (E4P) giving rise to 3-deoxy-D-arabino-heptulosonate-7-phosphate (DAHP). This chain is Phospho-2-dehydro-3-deoxyheptonate aldolase, Trp-sensitive (aroH), found in Shigella flexneri.